The sequence spans 57 residues: Putative secreted protein MT0250 (57 aa).

The N-terminal stretch at 1 to 32 (MNRIVAPAAASVVVGLLLGAAAIFGVTLMVQQ) is a signal peptide. Residues 34–57 (KKPPLPGGDPSSSVLNRVEYGNRS) are disordered.

The protein is Putative secreted protein MT0250 of Mycobacterium tuberculosis (strain CDC 1551 / Oshkosh).